The following is a 347-amino-acid chain: Heat-inducible transcription repressor HrcA (347 aa).

Belongs to the HrcA family.

Its function is as follows. Negative regulator of class I heat shock genes (grpE-dnaK-dnaJ and groELS operons). Prevents heat-shock induction of these operons. The chain is Heat-inducible transcription repressor HrcA from Lactiplantibacillus plantarum (strain ATCC BAA-793 / NCIMB 8826 / WCFS1) (Lactobacillus plantarum).